Consider the following 279-residue polypeptide: Large ribosomal subunit protein uL2 (279 aa).

The tract at residues 223–279 (TVRGSAMNPNDHPHGGGEGRSPVGMDAPRTPWGKRHMGVKTRNNKKSSTSMIVRRRK) is disordered. Residues 254 to 267 (WGKRHMGVKTRNNK) are compositionally biased toward basic residues.

The protein belongs to the universal ribosomal protein uL2 family. As to quaternary structure, part of the 50S ribosomal subunit. Forms a bridge to the 30S subunit in the 70S ribosome.

Functionally, one of the primary rRNA binding proteins. Required for association of the 30S and 50S subunits to form the 70S ribosome, for tRNA binding and peptide bond formation. It has been suggested to have peptidyltransferase activity; this is somewhat controversial. Makes several contacts with the 16S rRNA in the 70S ribosome. In Ureaplasma parvum serovar 3 (strain ATCC 27815 / 27 / NCTC 11736), this protein is Large ribosomal subunit protein uL2.